Here is a 397-residue protein sequence, read N- to C-terminus: Elongation factor Tu (397 aa).

In terms of domain architecture, tr-type G spans 10–207 (KPHVNVGTIG…TLDSYIPEPV (198 aa)). Residues 19–26 (GHVDHGKT) form a G1 region. GTP is bound at residue 19-26 (GHVDHGKT). T26 is a binding site for Mg(2+). Residues 60-64 (GITIN) are G2. Y77 is modified (phosphotyrosine). A G3 region spans residues 81-84 (DCPG). 81-85 (DCPGH) contacts GTP. Y88 carries the phosphotyrosine modification. Residue 136-139 (NKAD) coordinates GTP. Positions 136–139 (NKAD) are G4. The tract at residues 174 to 176 (SAL) is G5.

Belongs to the TRAFAC class translation factor GTPase superfamily. Classic translation factor GTPase family. EF-Tu/EF-1A subfamily. Monomer.

It localises to the cytoplasm. The catalysed reaction is GTP + H2O = GDP + phosphate + H(+). GTP hydrolase that promotes the GTP-dependent binding of aminoacyl-tRNA to the A-site of ribosomes during protein biosynthesis. The chain is Elongation factor Tu from Pseudomonas aeruginosa (strain UCBPP-PA14).